A 502-amino-acid chain; its full sequence is MSELRDTRLEKAQALIECGQVPYALRFEPSHRTAELQQAHADLPNGEERDVSVAIAGRVMTRRVMGKLAFFTLADETGPIQLFLEKAALGDAFKQITSLVDAGDWIGVKGTLRRTDRGELSVKAAQWQMLSKSLQPLPDKWHGLADVEKRYRQRYLDLIVSPDTRDTFRRRAQLVSGIRRWLDERDFLEIETPVLQSEPGGADARPFETHHNALDLPLTLRIATELHLKRLVVGGFERVYELGRIFRNEGVSTRHNPEFTSVEIYQAFADYNDMMDLTEELISSVTQQVCGSTLINYQGTEINLAPGWRRATMHELVKEATGLDFAGFSSREDAAAAMEAKGLQTPALADSVGRLLNEAFEQAVEETLIQPTFVTDYPVEISPLARSHRSKPGLVERFELFIVGREHGNAFSELTDPVDQRQRLEAQQERRAAGDLEAQRVDEDFLNALEVGMPPTGGLGIGIDRLVMLLTDSPSIRDVIAFPLLKPESRDGSAAVDNGSTE.

Residues glutamate 399 and glutamate 406 each coordinate Mg(2+).

The protein belongs to the class-II aminoacyl-tRNA synthetase family. Homodimer. The cofactor is Mg(2+).

Its subcellular location is the cytoplasm. It catalyses the reaction tRNA(Lys) + L-lysine + ATP = L-lysyl-tRNA(Lys) + AMP + diphosphate. The chain is Lysine--tRNA ligase from Synechococcus sp. (strain RCC307).